We begin with the raw amino-acid sequence, 154 residues long: MGLSDGEWQLVLKIWGKVEADLAGHGQDVLIRLFTAHPETLEKFDKFKNLKTADEMKASEDLKKHGVTVLTALGGILKKKGQHEAEIKPLAQSHATKHKIPVKYLEFISEAIIHVLQNKHSGDFGTDVQGAMSKALELFRNDIAAKYKELGFQG.

One can recognise a Globin domain in the interval 2 to 148; the sequence is GLSDGEWQLV…FRNDIAAKYK (147 aa). The residue at position 4 (Ser-4) is a Phosphoserine. His-65 contributes to the nitrite binding site. His-65 contributes to the O2 binding site. Position 68 is a phosphothreonine (Thr-68). His-94 provides a ligand contact to heme b.

Belongs to the globin family. Monomeric.

It is found in the cytoplasm. Its subcellular location is the sarcoplasm. It catalyses the reaction Fe(III)-heme b-[protein] + nitric oxide + H2O = Fe(II)-heme b-[protein] + nitrite + 2 H(+). The enzyme catalyses H2O2 + AH2 = A + 2 H2O. In terms of biological role, monomeric heme protein which primary function is to store oxygen and facilitate its diffusion within muscle tissues. Reversibly binds oxygen through a pentacoordinated heme iron and enables its timely and efficient release as needed during periods of heightened demand. Depending on the oxidative conditions of tissues and cells, and in addition to its ability to bind oxygen, it also has a nitrite reductase activity whereby it regulates the production of bioactive nitric oxide. Under stress conditions, like hypoxia and anoxia, it also protects cells against reactive oxygen species thanks to its pseudoperoxidase activity. The protein is Myoglobin (MB) of Otolemur crassicaudatus (Brown greater galago).